The sequence spans 513 residues: ATP synthase subunit alpha (513 aa).

169–176 lines the ATP pocket; that stretch reads GDRQTGKT.

The protein belongs to the ATPase alpha/beta chains family. As to quaternary structure, F-type ATPases have 2 components, CF(1) - the catalytic core - and CF(0) - the membrane proton channel. CF(1) has five subunits: alpha(3), beta(3), gamma(1), delta(1), epsilon(1). CF(0) has three main subunits: a(1), b(2) and c(9-12). The alpha and beta chains form an alternating ring which encloses part of the gamma chain. CF(1) is attached to CF(0) by a central stalk formed by the gamma and epsilon chains, while a peripheral stalk is formed by the delta and b chains.

It localises to the cell inner membrane. It carries out the reaction ATP + H2O + 4 H(+)(in) = ADP + phosphate + 5 H(+)(out). In terms of biological role, produces ATP from ADP in the presence of a proton gradient across the membrane. The alpha chain is a regulatory subunit. The protein is ATP synthase subunit alpha of Bordetella petrii (strain ATCC BAA-461 / DSM 12804 / CCUG 43448).